A 485-amino-acid chain; its full sequence is Glutamyl-tRNA(Gln) amidotransferase subunit A (485 aa).

Active-site charge relay system residues include Lys-76 and Ser-155. Ser-179 functions as the Acyl-ester intermediate in the catalytic mechanism.

Belongs to the amidase family. GatA subfamily. In terms of assembly, heterotrimer of A, B and C subunits.

The catalysed reaction is L-glutamyl-tRNA(Gln) + L-glutamine + ATP + H2O = L-glutaminyl-tRNA(Gln) + L-glutamate + ADP + phosphate + H(+). Functionally, allows the formation of correctly charged Gln-tRNA(Gln) through the transamidation of misacylated Glu-tRNA(Gln) in organisms which lack glutaminyl-tRNA synthetase. The reaction takes place in the presence of glutamine and ATP through an activated gamma-phospho-Glu-tRNA(Gln). This chain is Glutamyl-tRNA(Gln) amidotransferase subunit A, found in Marinobacter nauticus (strain ATCC 700491 / DSM 11845 / VT8) (Marinobacter aquaeolei).